Here is a 205-residue protein sequence, read N- to C-terminus: MPFYRRSAGSPAGHPLSRLLVLSGPSGVGKDTILREVRERHPGLYVSVSATTRPPRPGEVDGRDYRFLSAAEFEEWIATDDLLEWACYVGNYYGTPKTPVLERLAVGEPVVLEIDVQGALQVKNNFPAAMLVFIRPPSLEVLAERLRSRGTDAPEAIERRLARAREELALADRFDHQVVNDKLAAAVEAVERLLFEEIPDEPAGG.

The Guanylate kinase-like domain maps to 17 to 195 (SRLLVLSGPS…AVEAVERLLF (179 aa)). 24–31 (GPSGVGKD) is a binding site for ATP.

The protein belongs to the guanylate kinase family.

It is found in the cytoplasm. It carries out the reaction GMP + ATP = GDP + ADP. In terms of biological role, essential for recycling GMP and indirectly, cGMP. This Gloeobacter violaceus (strain ATCC 29082 / PCC 7421) protein is Guanylate kinase.